Consider the following 444-residue polypeptide: Homogentisate 1,2-dioxygenase (444 aa).

Residues 92–111 are disordered; sequence GDSADVPPTPPNQLRWDPLP. Catalysis depends on histidine 298, which acts as the Proton acceptor. Residues histidine 341 and glutamate 347 each coordinate Fe cation. The homogentisate site is built by tyrosine 356 and histidine 377. Histidine 377 contacts Fe cation.

This sequence belongs to the homogentisate dioxygenase family. Hexamer; dimer of trimers. Fe cation is required as a cofactor.

The enzyme catalyses homogentisate + O2 = 4-maleylacetoacetate + H(+). It participates in amino-acid degradation; L-phenylalanine degradation; acetoacetate and fumarate from L-phenylalanine: step 4/6. Its function is as follows. Involved in the catabolism of homogentisate (2,5-dihydroxyphenylacetate or 2,5-OH-PhAc), a central intermediate in the degradation of phenylalanine and tyrosine. Catalyzes the oxidative ring cleavage of the aromatic ring of homogentisate to yield maleylacetoacetate. The sequence is that of Homogentisate 1,2-dioxygenase from Burkholderia vietnamiensis (strain G4 / LMG 22486) (Burkholderia cepacia (strain R1808)).